The chain runs to 191 residues: Calcium-activated potassium channel subunit beta-1 (191 aa).

The Cytoplasmic portion of the chain corresponds to 1–18; that stretch reads MGKKLVMAQKRGETRALC. The chain crosses the membrane as a helical span at residues 19–39; sequence LGVAMVVCAAITYYILGTTVL. The Extracellular segment spans residues 40 to 155; sequence PLYQKSVWTQ…VVYQRLYGPQ (116 aa). Asn-80 and Asn-142 each carry an N-linked (GlcNAc...) asparagine glycan. Residues 156–176 traverse the membrane as a helical segment; the sequence is ILLFSFFWPTFLLTGGLLIIA. Residues 177-191 are Cytoplasmic-facing; it reads MVKLNRSLSVLAAQK.

This sequence belongs to the KCNMB (TC 8.A.14.1) family. KCNMB1 subfamily. Interacts with KCNMA1 tetramer. There are probably 4 molecules of KCMNB1 per KCNMA1 tetramer. In terms of processing, N-glycosylated. As to expression, weakly expressed. In brain, it is expressed in a few discrete populations of neurons that also express KCNMA1.

The protein localises to the membrane. Regulatory subunit of the calcium activated potassium KCNMA1 (maxiK) channel. Modulates the calcium sensitivity and gating kinetics of KCNMA1, thereby contributing to KCNMA1 channel diversity. Increases the apparent Ca(2+)/voltage sensitivity of the KCNMA1 channel. It also modifies KCNMA1 channel kinetics and alters its pharmacological properties. It slows down the activation and the deactivation kinetics of the channel. Acts as a negative regulator of smooth muscle contraction by enhancing the calcium sensitivity to KCNMA1. Its presence is also a requirement for internal binding of the KCNMA1 channel opener dehydrosoyasaponin I (DHS-1) triterpene glycoside and for external binding of the agonist hormone 17-beta-estradiol (E2). Increases the binding activity of charybdotoxin (CTX) toxin to KCNMA1 peptide blocker by increasing the CTX association rate and decreasing the dissociation rate. The sequence is that of Calcium-activated potassium channel subunit beta-1 (Kcnmb1) from Rattus norvegicus (Rat).